Here is a 62-residue protein sequence, read N- to C-terminus: MDVTVSKVDTKLLDLLVCPLTKGSLSYDREKNELVSEKARLAYPIRDGIPIMLISEARRIED.

This sequence belongs to the UPF0434 family.

This is UPF0434 protein Arad_4458 from Rhizobium rhizogenes (strain K84 / ATCC BAA-868) (Agrobacterium radiobacter).